Here is a 149-residue protein sequence, read N- to C-terminus: Large ribosomal subunit protein uL11 (149 aa).

Belongs to the universal ribosomal protein uL11 family. As to quaternary structure, part of the ribosomal stalk of the 50S ribosomal subunit. Interacts with L10 and the large rRNA to form the base of the stalk. L10 forms an elongated spine to which L12 dimers bind in a sequential fashion forming a multimeric L10(L12)X complex. In terms of processing, one or more lysine residues are methylated.

Functionally, forms part of the ribosomal stalk which helps the ribosome interact with GTP-bound translation factors. The sequence is that of Large ribosomal subunit protein uL11 from Methylorubrum extorquens (strain CM4 / NCIMB 13688) (Methylobacterium extorquens).